A 751-amino-acid chain; its full sequence is Catalase-peroxidase (751 aa).

Residues Met-1–Arg-24 form a disordered region. A cross-link (tryptophyl-tyrosyl-methioninium (Trp-Tyr) (with M-267)) is located at residues Trp-95 to Tyr-241. His-96 (proton acceptor) is an active-site residue. Residues Tyr-241–Met-267 constitute a cross-link (tryptophyl-tyrosyl-methioninium (Tyr-Met) (with W-95)). His-282 is a binding site for heme b.

The protein belongs to the peroxidase family. Peroxidase/catalase subfamily. As to quaternary structure, homodimer or homotetramer. It depends on heme b as a cofactor. In terms of processing, formation of the three residue Trp-Tyr-Met cross-link is important for the catalase, but not the peroxidase activity of the enzyme.

The protein localises to the cytoplasm. The catalysed reaction is H2O2 + AH2 = A + 2 H2O. It catalyses the reaction 2 H2O2 = O2 + 2 H2O. Its function is as follows. Bifunctional enzyme with both catalase and broad-spectrum peroxidase activity. The chain is Catalase-peroxidase from Aspergillus oryzae (strain ATCC 42149 / RIB 40) (Yellow koji mold).